The chain runs to 258 residues: Glutamate racemase (258 aa).

Substrate is bound by residues 11 to 12 (DS) and 43 to 44 (YG). Cysteine 74 acts as the Proton donor/acceptor in catalysis. 75–76 (NT) contributes to the substrate binding site. Cysteine 182 functions as the Proton donor/acceptor in the catalytic mechanism. 183 to 184 (TH) serves as a coordination point for substrate.

This sequence belongs to the aspartate/glutamate racemases family.

The catalysed reaction is L-glutamate = D-glutamate. It functions in the pathway cell wall biogenesis; peptidoglycan biosynthesis. Functionally, provides the (R)-glutamate required for cell wall biosynthesis. The polypeptide is Glutamate racemase (Leptospira borgpetersenii serovar Hardjo-bovis (strain JB197)).